A 182-amino-acid polypeptide reads, in one-letter code: Adenylate kinase (182 aa).

ATP is bound at residue 12–17 (GAGKGT). The interval 32-61 (STGELLRKEIEMNTNLGIQVKDIMNRGELV) is NMP. AMP-binding positions include Thr-33, Arg-38, 59-61 (ELV), 85-88 (GYPR), and Gln-92. The tract at residues 126 to 132 (LRGRKDD) is LID. An ATP-binding site is contributed by Arg-127. Residues Arg-129 and Arg-140 each contribute to the AMP site. Arg-168 is a binding site for ATP.

Belongs to the adenylate kinase family. In terms of assembly, monomer.

The protein localises to the cytoplasm. The enzyme catalyses AMP + ATP = 2 ADP. Its pathway is purine metabolism; AMP biosynthesis via salvage pathway; AMP from ADP: step 1/1. Functionally, catalyzes the reversible transfer of the terminal phosphate group between ATP and AMP. Plays an important role in cellular energy homeostasis and in adenine nucleotide metabolism. The protein is Adenylate kinase of Prochlorococcus marinus (strain AS9601).